A 74-amino-acid chain; its full sequence is U4-theraphotoxin-Cg1a (74 aa).

The N-terminal stretch at 1-19 (MNATIFALLLLLNLAMHNA) is a signal peptide. Residues 20 to 39 (AEQSSETDMDDTLLIPEINR) constitute a propeptide that is removed on maturation. 3 disulfides stabilise this stretch: C42/C56, C49/C61, and C55/C71.

It belongs to the neurotoxin 36 family. 01 subfamily. As to expression, expressed by the venom gland.

Its subcellular location is the secreted. Functionally, probable ion channel inhibitor. This chain is U4-theraphotoxin-Cg1a, found in Chilobrachys guangxiensis (Chinese earth tiger tarantula).